Consider the following 159-residue polypeptide: Pathogenesis-related leaf protein 6 (159 aa).

A signal peptide spans 1 to 24; the sequence is MGLFNISLLLTCLMVLAIFHSCEA. Pyrrolidone carboxylic acid is present on Gln25. The 116-residue stretch at 32-147 folds into the SCP domain; it reads LAVHNDARAQ…NGWWFISCNY (116 aa). 3 disulfides stabilise this stretch: Cys68-Cys136, Cys109-Cys115, and Cys131-Cys145.

Belongs to the CRISP family.

Probably involved in the defense reaction of plants against pathogens. Has antifungal activity. In Solanum lycopersicum (Tomato), this protein is Pathogenesis-related leaf protein 6 (PR1B1).